The chain runs to 354 residues: Decorin (354 aa).

The signal sequence occupies residues methionine 1–alanine 16. The propeptide occupies glycine 17 to glutamate 30. A glycan (O-linked (Xyl...) (glycosaminoglycan) serine) is linked at serine 34. Intrachain disulfides connect cysteine 49/cysteine 55 and cysteine 53/cysteine 62. LRR repeat units lie at residues aspartate 68 to isoleucine 88, threonine 89 to isoleucine 112, serine 113 to leucine 136, lysine 137 to isoleucine 157, threonine 158 to leucine 181, lysine 182 to isoleucine 207, threonine 208 to isoleucine 228, alanine 229 to isoleucine 252, threonine 253 to leucine 276, leucine 277 to isoleucine 299, serine 300 to valine 329, and arginine 330 to lysine 354. The N-linked (GlcNAc...) asparagine glycan is linked to asparagine 206. 3 N-linked (GlcNAc...) asparagine glycosylation sites follow: asparagine 241, asparagine 257, and asparagine 298. A disulfide bridge connects residues cysteine 308 and cysteine 341.

It belongs to the small leucine-rich proteoglycan (SLRP) family. SLRP class I subfamily. As to quaternary structure, binds to type I and type II collagen, fibronectin and TGF-beta. Forms a ternary complex with MFAP2 and ELN. Interacts with DPT. The attached glycosaminoglycan chain can be either chondroitin sulfate or dermatan sulfate depending upon the tissue of origin.

It localises to the secreted. Its subcellular location is the extracellular space. It is found in the extracellular matrix. In terms of biological role, may affect the rate of fibrils formation. May be implicated in the dilatation of the rat cervix. This chain is Decorin (Dcn), found in Rattus norvegicus (Rat).